The primary structure comprises 120 residues: NAD(P)H-quinone oxidoreductase subunit 3, chloroplastic (120 aa).

The next 3 membrane-spanning stretches (helical) occupy residues Ile-9 to Gly-29, Met-64 to Met-84, and Val-88 to Leu-108.

This sequence belongs to the complex I subunit 3 family. NDH is composed of at least 16 different subunits, 5 of which are encoded in the nucleus.

The protein localises to the plastid. It localises to the chloroplast thylakoid membrane. It catalyses the reaction a plastoquinone + NADH + (n+1) H(+)(in) = a plastoquinol + NAD(+) + n H(+)(out). The catalysed reaction is a plastoquinone + NADPH + (n+1) H(+)(in) = a plastoquinol + NADP(+) + n H(+)(out). Functionally, NDH shuttles electrons from NAD(P)H:plastoquinone, via FMN and iron-sulfur (Fe-S) centers, to quinones in the photosynthetic chain and possibly in a chloroplast respiratory chain. The immediate electron acceptor for the enzyme in this species is believed to be plastoquinone. Couples the redox reaction to proton translocation, and thus conserves the redox energy in a proton gradient. The polypeptide is NAD(P)H-quinone oxidoreductase subunit 3, chloroplastic (Lupinus luteus (European yellow lupine)).